Here is a 113-residue protein sequence, read N- to C-terminus: uncharacterized protein (113 aa).

The protein localises to the mitochondrion. This is an uncharacterized protein from Paramecium tetraurelia.